The sequence spans 340 residues: Proline-rich transmembrane protein 2 (340 aa).

The disordered stretch occupies residues Met-1–Gly-261. The Cytoplasmic portion of the chain corresponds to Met-1–Tyr-268. A Phosphoserine modification is found at Ser-28. Phosphothreonine is present on Thr-74. 2 stretches are compositionally biased toward pro residues: residues Pro-131–Ala-155 and Ala-197–Lys-207. Phosphoserine is present on Ser-238. Arg-240 is modified (omega-N-methylarginine). Phosphoserine is present on residues Ser-248 and Ser-249. An intramembrane region (helical) is located at residues Ile-269–Ala-289. Topologically, residues Tyr-290–Ser-317 are cytoplasmic. Residues Ile-318–Val-338 form a helical membrane-spanning segment. Topologically, residues Tyr-339–Lys-340 are extracellular.

The protein belongs to the CD225/Dispanin family. As to quaternary structure, component of the outer core of AMPAR complex. AMPAR complex consists of an inner core made of 4 pore-forming GluA/GRIA proteins (GRIA1, GRIA2, GRIA3 and GRIA4) and 4 major auxiliary subunits arranged in a twofold symmetry. One of the two pairs of distinct binding sites is occupied either by CNIH2, CNIH3 or CACNG2, CACNG3. The other harbors CACNG2, CACNG3, CACNG4, CACNG8 or GSG1L. This inner core of AMPAR complex is complemented by outer core constituents binding directly to the GluA/GRIA proteins at sites distinct from the interaction sites of the inner core constituents. Outer core constituents include at least PRRT1, PRRT2, CKAMP44/SHISA9, FRRS1L and NRN1. The proteins of the inner and outer core serve as a platform for other, more peripherally associated AMPAR constituents. Alone or in combination, these auxiliary subunits control the gating and pharmacology of the AMPAR complex and profoundly impact their biogenesis and protein processing. Interacts with intersectin 1/ITSN1. Interacts with SNARE complex components, including SNAP25, STX1A, SYT1 and SYT2; this interaction may inhibit SNARE complex formation.

It localises to the cell membrane. The protein localises to the presynaptic cell membrane. Its subcellular location is the synapse. The protein resides in the cell projection. It is found in the axon. It localises to the cytoplasmic vesicle. The protein localises to the secretory vesicle. Its subcellular location is the synaptic vesicle membrane. The protein resides in the postsynaptic density membrane. It is found in the dendritic spine. Its function is as follows. As a component of the outer core of AMPAR complex, may be involved in synaptic transmission in the central nervous system. In hippocampal neurons, in presynaptic terminals, plays an important role in the final steps of neurotransmitter release, possibly by regulating Ca(2+)-sensing. In the cerebellum, may inhibit SNARE complex formation and down-regulate short-term facilitation. This chain is Proline-rich transmembrane protein 2 (PRRT2), found in Pongo abelii (Sumatran orangutan).